We begin with the raw amino-acid sequence, 190 residues long: Apolipoprotein M (190 aa).

The not cleaved signal peptide spans 1–22 (MFHQVWAALLSLYGLLFNSMNQ). Disulfide bonds link Cys23-Cys169, Cys95-Cys185, and Cys130-Cys159. Tetradecanoate-binding residues include Glu138 and Arg145.

It belongs to the calycin superfamily. Lipocalin family. Highly divergent. As to quaternary structure, interacts with LRP2; LRP2 mediates APOM renal uptake and subsequent lysosomal degradation. In terms of tissue distribution, expressed by the liver; secreted in plasma.

Its subcellular location is the secreted. Probably involved in lipid transport. Can bind sphingosine-1-phosphate, myristic acid, palmitic acid and stearic acid, retinol, all-trans-retinoic acid and 9-cis-retinoic acid. The chain is Apolipoprotein M (Apom) from Mus musculus (Mouse).